A 212-amino-acid polypeptide reads, in one-letter code: ATP phosphoribosyltransferase (212 aa).

Belongs to the ATP phosphoribosyltransferase family. Short subfamily. Heteromultimer composed of HisG and HisZ subunits.

Its subcellular location is the cytoplasm. The enzyme catalyses 1-(5-phospho-beta-D-ribosyl)-ATP + diphosphate = 5-phospho-alpha-D-ribose 1-diphosphate + ATP. Its pathway is amino-acid biosynthesis; L-histidine biosynthesis; L-histidine from 5-phospho-alpha-D-ribose 1-diphosphate: step 1/9. Its function is as follows. Catalyzes the condensation of ATP and 5-phosphoribose 1-diphosphate to form N'-(5'-phosphoribosyl)-ATP (PR-ATP). Has a crucial role in the pathway because the rate of histidine biosynthesis seems to be controlled primarily by regulation of HisG enzymatic activity. This chain is ATP phosphoribosyltransferase, found in Citrifermentans bemidjiense (strain ATCC BAA-1014 / DSM 16622 / JCM 12645 / Bem) (Geobacter bemidjiensis).